We begin with the raw amino-acid sequence, 216 residues long: Probable nicotinate-nucleotide adenylyltransferase (216 aa).

The protein belongs to the NadD family.

The catalysed reaction is nicotinate beta-D-ribonucleotide + ATP + H(+) = deamido-NAD(+) + diphosphate. It functions in the pathway cofactor biosynthesis; NAD(+) biosynthesis; deamido-NAD(+) from nicotinate D-ribonucleotide: step 1/1. Catalyzes the reversible adenylation of nicotinate mononucleotide (NaMN) to nicotinic acid adenine dinucleotide (NaAD). This Geobacillus thermodenitrificans (strain NG80-2) protein is Probable nicotinate-nucleotide adenylyltransferase.